Here is a 238-residue protein sequence, read N- to C-terminus: uncharacterized protein (238 aa).

The N-terminal stretch at 1–19 (MKINLFFVFLFELLHFVAA) is a signal peptide. The Lumenal portion of the chain corresponds to 20 to 197 (YSCEGDESAA…LALYGHLSQK (178 aa)). Residues 198–216 (YTPLGMNVAIFGISAYIMY) form a helical membrane-spanning segment. At 217 to 238 (RSSKKAKQKQAAAAAAAAAKKK) the chain is on the cytoplasmic side.

The protein resides in the endoplasmic reticulum membrane. This is an uncharacterized protein from Schizosaccharomyces pombe (strain 972 / ATCC 24843) (Fission yeast).